The sequence spans 465 residues: D(1C) dopamine receptor (465 aa).

Residues 1–30 are Extracellular-facing; sequence MENFSIFNVTVNVWHADLDVGNSDLSLRAL. N-linked (GlcNAc...) asparagine glycans are attached at residues Asn3 and Asn8. A helical transmembrane segment spans residues 31-54; it reads TGLLLSLLILSTLLGNTLVCLAVI. Over 55–65 the chain is Cytoplasmic; sequence KFRHLRSKVTN. A helical transmembrane segment spans residues 66 to 92; sequence FFVISLAVSDLFVALLVMPWKAVTEVA. Residues 93–101 lie on the Extracellular side of the membrane; the sequence is GFWVFGDFC. Cys101 and Cys187 form a disulfide bridge. A helical membrane pass occupies residues 102–124; the sequence is DTWVAFDIMCSTASILNLCIISL. The Cytoplasmic portion of the chain corresponds to 125–143; sequence DRYWAIASPFRYERKMTQR. The helical transmembrane segment at 144 to 168 threads the bilayer; it reads VAFIMIGVAWTLSILISFIPVQLSW. Topologically, residues 169 to 193 are extracellular; it reads HKSHEADEELNGVNHTENCDSSLNR. The helical transmembrane segment at 194–219 threads the bilayer; sequence TYAISSSLISFYIPVVIMIGTYTRIY. At 220–264 the chain is on the cytoplasmic side; sequence RIAQTQIRRISSLERAVEHAQRCSSRLSNENSLKTSFRKETKVLK. The helical transmembrane segment at 265–291 threads the bilayer; sequence TLSIIMGVFVFCWLPFFVLNCMIPFCH. At 292 to 309 the chain is on the extracellular side; it reads MNLPGQNEPEPPCVSETT. The chain crosses the membrane as a helical span at residues 310–334; that stretch reads FNIFVWFGWANSSLNPVIYAFNADF. Residues 335–465 are Cytoplasmic-facing; it reads RKAFTTILGC…EDRHYTTKLY (131 aa). Cys344 carries the S-palmitoyl cysteine lipid modification.

It belongs to the G-protein coupled receptor 1 family. As to expression, brain and kidney.

The protein resides in the cell membrane. Its subcellular location is the cell projection. It localises to the cilium membrane. Functionally, this is one of the five types (D1 to D5) of receptors for dopamine. The activity of this receptor is mediated by G proteins which activate adenylyl cyclase. The protein is D(1C) dopamine receptor (drd1c) of Xenopus laevis (African clawed frog).